The primary structure comprises 594 residues: UvrABC system protein C (594 aa).

Residues 13-99 enclose the GIY-YIG domain; sequence NGSGVYQYFD…IKQLKPKYNI (87 aa). In terms of domain architecture, UVR spans 205–240; sequence DKLIKELQLKMDRLSSNLRFEEALIYRDRISKIQKI.

It belongs to the UvrC family. Interacts with UvrB in an incision complex.

It is found in the cytoplasm. Its function is as follows. The UvrABC repair system catalyzes the recognition and processing of DNA lesions. UvrC both incises the 5' and 3' sides of the lesion. The N-terminal half is responsible for the 3' incision and the C-terminal half is responsible for the 5' incision. The chain is UvrABC system protein C from Helicobacter acinonychis (strain Sheeba).